A 424-amino-acid polypeptide reads, in one-letter code: Histidine--tRNA ligase (424 aa).

It belongs to the class-II aminoacyl-tRNA synthetase family. Homodimer.

The protein resides in the cytoplasm. The enzyme catalyses tRNA(His) + L-histidine + ATP = L-histidyl-tRNA(His) + AMP + diphosphate + H(+). The chain is Histidine--tRNA ligase from Klebsiella pneumoniae (strain 342).